Here is a 778-residue protein sequence, read N- to C-terminus: Aerobic respiration control sensor protein ArcB (778 aa).

Topologically, residues 1–25 are cytoplasmic; the sequence is MKQIRLLAQYYVDLMMKLGLVRFSM. The chain crosses the membrane as a helical span at residues 26-46; the sequence is LLALALVVLAIVVQMAVTMVL. The Periplasmic segment spans residues 47–57; sequence HGQVESIDVIR. A helical membrane pass occupies residues 58–78; that stretch reads SIFFGLLITPWAVYFLSVVVE. Topologically, residues 79–778 are cytoplasmic; sequence QLEESRQRLS…KAWVAKATKK (700 aa). Positions 153–223 constitute a PAS domain; it reads QSSFLRSFLD…ETDEKVFRHN (71 aa). One can recognise a PAC domain in the interval 226-278; it reads LTYEQWLDYPDGRKACFEIRKVPYYDRVGKRHGLMGFGRDITERKRYQDALER. Positions 289 to 507 constitute a Histidine kinase domain; it reads TISHELRTPL…TFTLTIHAPS (219 aa). Position 292 is a phosphohistidine; by autocatalysis (His-292). In terms of domain architecture, Response regulatory spans 527–643; that stretch reads NVLLVEDIEL…ALTAMIKKFW (117 aa). Asp-576 bears the 4-aspartylphosphate mark. The region spanning 678–771 is the HPt domain; the sequence is GPKLITDGLA…RHDVEVLKAW (94 aa). His-717 is subject to Phosphohistidine.

Post-translationally, activation requires a sequential transfer of a phosphate group from a His in the primary transmitter domain, to an Asp in the receiver domain and to a His in the secondary transmitter domain.

It localises to the cell inner membrane. It carries out the reaction ATP + protein L-histidine = ADP + protein N-phospho-L-histidine.. Member of the two-component regulatory system ArcB/ArcA. Sensor-regulator protein for anaerobic repression of the arc modulon. Activates ArcA via a four-step phosphorelay. ArcB can also dephosphorylate ArcA by a reverse phosphorelay involving His-717 and Asp-576. The polypeptide is Aerobic respiration control sensor protein ArcB (arcB) (Escherichia coli (strain K12)).